A 182-amino-acid chain; its full sequence is MELGELLYNKSEYIETASGNKVSRQSVLCGSQNIVLNGKTIVMNDCIIRGDLANVRVGRHCVVKSRSVIRPPFKKFSKGVAFFPLHIGDHVFIEEDCVVNAAQIGSYVHVGKNCVIGRRCVLKDCCKILDNTVLPPETVVPPFTVFSGCPGLFSGELPECTQELMIDVTKSYYQKFLPLTQV.

Met-1 carries the N-acetylmethionine modification.

It belongs to the dynactin subunits 5/6 family. Dynactin subunit 5 subfamily. Subunit of dynactin, a multiprotein complex part of a tripartite complex with dynein and a adapter, such as BICDL1, BICD2 or HOOK3. The dynactin complex is built around ACTR1A/ACTB filament and consists of an actin-related filament composed of a shoulder domain, a pointed end and a barbed end. Its length is defined by its flexible shoulder domain. The soulder is composed of 2 DCTN1 subunits, 4 DCTN2 and 2 DCTN3. The 4 DCNT2 (via N-terminus) bind the ACTR1A filament and act as molecular rulers to determine the length. The pointed end is important for binding dynein-dynactin cargo adapters. Consists of 4 subunits: ACTR10, DCNT4, DCTN5 and DCTN6. Within the complex DCTN6 forms a heterodimer with DCTN5. The barbed end is composed of a CAPZA1:CAPZB heterodimers, which binds ACTR1A/ACTB filament and dynactin and stabilizes dynactin. Interacts with N4BP2L1.

The protein resides in the cytoplasm. The protein localises to the cytoskeleton. It is found in the chromosome. Its subcellular location is the centromere. It localises to the kinetochore. Part of the dynactin complex that activates the molecular motor dynein for ultra-processive transport along microtubules. This is Dynactin subunit 5 from Homo sapiens (Human).